We begin with the raw amino-acid sequence, 518 residues long: MDLAIVSSPTRDVVRCCDCGCDCSLNGASPGSLLRSVKRKYEEFENEKLFHIPELELDLSSNAKVQIENELELLRETVSSQQQSIQDLYEELDEERNAASTAASEAMSMILRLQRDKAELQMELRQFKRFAEEKMEHDQQELLDLEDLIYKREQTIQALTFEAQAYKHRMMSFGFTEAEVETEKNMLSRNPSMIENDYQYDLPTSDYPPIKCNVNENPGPLEADIDVDDVEKYPLADSPHPLKTLERRISQMERNPSFTQPTGDVSGGRHYTEKNVVGQSPRHQRHFRRVSTGSASSLLGTTREKRLDFSNDSPRSNNGSFRKMEDPPYAAGNSFARDKGDSSEIGDNDMNDRVYTIDSVHHSVSHSGTAEQKFKNDTADGYAMSPREISNQPDLGDPEISKLYMRLQALEADRESMRQAIMSMRTEKAQMVLLKEIAQHLSKDVVPERRLPLRKTSIIGAFNFISVFKWITSFVFWRRKARRSKYMNGVQGNNMGLQMLLEKTPRIRQWRCLSSTQV.

The 99-residue stretch at 69 to 167 (NELELLRETV…ALTFEAQAYK (99 aa)) folds into the GTD-binding domain. The tract at residues 276-350 (VVGQSPRHQR…DSSEIGDNDM (75 aa)) is disordered. Residues 291–301 (STGSASSLLGT) show a composition bias toward low complexity. Polar residues predominate over residues 310 to 320 (SNDSPRSNNGS). Serine 385 is modified (phosphoserine). Positions 399 to 431 (EISKLYMRLQALEADRESMRQAIMSMRTEKAQM) form a coiled coil. The chain crosses the membrane as a helical span at residues 458–477 (IIGAFNFISVFKWITSFVFW).

As to quaternary structure, interacts with myosin XI-I.

The protein resides in the endomembrane system. In terms of biological role, membrane-anchored myosin receptors that define a distinct, plant-specific transport vesicle compartment. The protein is Myosin-binding protein 7 of Arabidopsis thaliana (Mouse-ear cress).